The chain runs to 262 residues: Cap-specific mRNA (nucleoside-2'-O-)-methyltransferase (262 aa).

The RrmJ-type SAM-dependent 2'-O-MTase domain maps to 34–226; the sequence is TRRPRCWRKL…ERYLICFNKL (193 aa). Positions 67 and 140 each coordinate S-adenosyl-L-methionine. The Proton acceptor role is filled by lysine 180.

It carries out the reaction a 5'-end (N(7)-methyl 5'-triphosphoguanosine)-ribonucleoside in mRNA + S-adenosyl-L-methionine = a 5'-end (N(7)-methyl 5'-triphosphoguanosine)-(2'-O-methyl-ribonucleoside) in mRNA + S-adenosyl-L-homocysteine + H(+). In terms of biological role, S-adenosyl-L-methionine-dependent methyltransferase that mediates mRNA cap 2'-O-ribose methylation to the 5'-cap structure of late viral transcripts. This Lepidoptera (butterflies and moths) protein is Cap-specific mRNA (nucleoside-2'-O-)-methyltransferase.